The primary structure comprises 115 residues: Putative gamma-glutamylcyclotransferase VC_2546 (115 aa).

Position 8–11 (8–11) interacts with substrate; the sequence is YGTL. E73 acts as the Proton acceptor in catalysis.

It belongs to the gamma-glutamylcyclotransferase family.

Putative gamma-glutamylcyclotransferase. In Vibrio cholerae serotype O1 (strain ATCC 39315 / El Tor Inaba N16961), this protein is Putative gamma-glutamylcyclotransferase VC_2546.